Consider the following 235-residue polypeptide: MRLAVNIDHVATLRNARGEFHPDPVEAALIAEQAGAAGIVCHLREDRRHIKDDDLRRLRAAVTTKLDLEMAMTEELQAIALATKPELITLVPEKREELTTEGGFDIVRHFDTLKAYLQPFRSAGIEVSLFIEPDKQAIELAAQAGADIVELHTGLYALKAGEAQEEELTRIGNAAAFARNIGLKVVAGHGLNYSNIAPFRNIVEIEEVSIGHAIITRAIFSGLEGAVREMVALIR.

Asn-6 contacts 3-amino-2-oxopropyl phosphate. 8-9 (DH) lines the 1-deoxy-D-xylulose 5-phosphate pocket. Arg-17 is a binding site for 3-amino-2-oxopropyl phosphate. Catalysis depends on His-42, which acts as the Proton acceptor. Positions 44 and 49 each coordinate 1-deoxy-D-xylulose 5-phosphate. Catalysis depends on Glu-69, which acts as the Proton acceptor. Thr-99 serves as a coordination point for 1-deoxy-D-xylulose 5-phosphate. The Proton donor role is filled by His-189. 3-amino-2-oxopropyl phosphate contacts are provided by residues Gly-190 and 211 to 212 (GH).

This sequence belongs to the PNP synthase family. In terms of assembly, homooctamer; tetramer of dimers.

It localises to the cytoplasm. It carries out the reaction 3-amino-2-oxopropyl phosphate + 1-deoxy-D-xylulose 5-phosphate = pyridoxine 5'-phosphate + phosphate + 2 H2O + H(+). Its pathway is cofactor biosynthesis; pyridoxine 5'-phosphate biosynthesis; pyridoxine 5'-phosphate from D-erythrose 4-phosphate: step 5/5. Functionally, catalyzes the complicated ring closure reaction between the two acyclic compounds 1-deoxy-D-xylulose-5-phosphate (DXP) and 3-amino-2-oxopropyl phosphate (1-amino-acetone-3-phosphate or AAP) to form pyridoxine 5'-phosphate (PNP) and inorganic phosphate. This Chlorobium chlorochromatii (strain CaD3) protein is Pyridoxine 5'-phosphate synthase.